Reading from the N-terminus, the 231-residue chain is 7-cyano-7-deazaguanine synthase (231 aa).

8–18 serves as a coordination point for ATP; sequence FSGGQDSTTCL. Zn(2+) contacts are provided by cysteine 188, cysteine 197, cysteine 200, and cysteine 203.

This sequence belongs to the QueC family. Zn(2+) serves as cofactor.

It carries out the reaction 7-carboxy-7-deazaguanine + NH4(+) + ATP = 7-cyano-7-deazaguanine + ADP + phosphate + H2O + H(+). Its pathway is purine metabolism; 7-cyano-7-deazaguanine biosynthesis. In terms of biological role, catalyzes the ATP-dependent conversion of 7-carboxy-7-deazaguanine (CDG) to 7-cyano-7-deazaguanine (preQ(0)). The chain is 7-cyano-7-deazaguanine synthase from Escherichia coli O1:K1 / APEC.